The chain runs to 355 residues: Peptide chain release factor 1 (355 aa).

Q233 bears the N5-methylglutamine mark.

Belongs to the prokaryotic/mitochondrial release factor family. Post-translationally, methylated by PrmC. Methylation increases the termination efficiency of RF1.

Its subcellular location is the cytoplasm. Functionally, peptide chain release factor 1 directs the termination of translation in response to the peptide chain termination codons UAG and UAA. The protein is Peptide chain release factor 1 of Dehalococcoides mccartyi (strain ATCC BAA-2100 / JCM 16839 / KCTC 5957 / BAV1).